A 206-amino-acid chain; its full sequence is Small ribosomal subunit protein uS4 (206 aa).

The S4 RNA-binding domain occupies 96–158; the sequence is SRLDNVVYRM…AKKQLRIQNA (63 aa).

The protein belongs to the universal ribosomal protein uS4 family. In terms of assembly, part of the 30S ribosomal subunit. Contacts protein S5. The interaction surface between S4 and S5 is involved in control of translational fidelity.

In terms of biological role, one of the primary rRNA binding proteins, it binds directly to 16S rRNA where it nucleates assembly of the body of the 30S subunit. With S5 and S12 plays an important role in translational accuracy. This is Small ribosomal subunit protein uS4 from Francisella tularensis subsp. holarctica (strain OSU18).